The following is a 566-amino-acid chain: MAATTSFSSSLSLITKPNNSSYTNQPLPLFPKPFLKPPHLSLLPSPLSSPPPSLIHGVSSYFSSPSPSEDNSHTPFDYHNDEDDEKPREECGVVGIYGDPEASRLCYLALHALQHRGQEGAGIVTVSPEKVLQTITGVGLVSEVFNESKLDQLPGEFAIGHVRYSTAGASMLKNVQPFVAGYRFGSIGVAHNGNLVNYKTLRAMLEENGSIFNTSSDTEVVLHLIAISKARPFFMRIIDACEKLQGAYSMVFVTEDKLVAVRDPYGFRPLVMGRRSNGAVVFASETCALDLIEATYEREVYPGEVLVVDKDGVKSQCLMPKFEPKQCIFEHIYFSLPNSIVFGRSVYESRHVFGEILATESPVECDVVIAVPDSGVVAALGYAAKSGVPFQQGLIRSHYVGRTFIEPSQKIRDFGVKLKLSPVRGVLEGKRVVVVDDSIVRGTTSSKIVRLLREAGAKEVHMRIASPPIVASCYYGVDTPSSEELISNRLSVEEINEFIGSDSLAFLSFDTLKKHLGKDSKSFCYACFTGDYPVKPTEVKVKRGGGDFIDDGLVGSFENIEAGWVR.

Residues 1-13 show a composition bias toward low complexity; sequence MAATTSFSSSLSL. Disordered regions lie at residues 1-28 and 58-87; these read MAAT…QPLP and VSSY…DEKP. The N-terminal 58 residues, 1-58, are a transit peptide targeting the chloroplast; sequence MAATTSFSSSLSLITKPNNSSYTNQPLPLFPKPFLKPPHLSLLPSPLSSPPPSLIHGV. Residues 15 to 25 show a composition bias toward polar residues; it reads TKPNNSSYTNQ. Positions 59–68 are enriched in low complexity; the sequence is SSYFSSPSPS. Positions 70-87 are enriched in basic and acidic residues; the sequence is DNSHTPFDYHNDEDDEKP. The Nucleophile role is filled by C91. Positions 91–311 constitute a Glutamine amidotransferase type-2 domain; the sequence is CGVVGIYGDP…PGEVLVVDKD (221 aa). [4Fe-4S] cluster is bound by residues C327, C473, C524, and C527.

This sequence in the C-terminal section; belongs to the purine/pyrimidine phosphoribosyltransferase family. Requires [4Fe-4S] cluster as cofactor. It depends on Mg(2+) as a cofactor. In terms of tissue distribution, expressed in flowers and roots. Also present in leaves, and, to a lower extent, in cotyledons.

Its subcellular location is the plastid. The protein localises to the chloroplast stroma. It catalyses the reaction 5-phospho-beta-D-ribosylamine + L-glutamate + diphosphate = 5-phospho-alpha-D-ribose 1-diphosphate + L-glutamine + H2O. It functions in the pathway purine metabolism; IMP biosynthesis via de novo pathway; N(1)-(5-phospho-D-ribosyl)glycinamide from 5-phospho-alpha-D-ribose 1-diphosphate: step 1/2. Catalyzes the first committed step of 'de novo' purine biosynthesis from glutamine. Involved in plastid biogenesis and cell division. The polypeptide is Amidophosphoribosyltransferase 1, chloroplastic (ASE1) (Arabidopsis thaliana (Mouse-ear cress)).